The primary structure comprises 154 residues: Ribonuclease 8 (154 aa).

Residues 1-27 (MAPARAGCCPLLLLLLGLRVAQIPVSA) form the signal peptide. Histidine 42 acts as the Proton acceptor in catalysis. Intrachain disulfides connect cysteine 64/cysteine 118, cysteine 82/cysteine 133, and cysteine 89/cysteine 96. Residues 65–69 (KDLNT) and lysine 90 each bind substrate. The Proton donor role is filled by histidine 149.

The protein belongs to the pancreatic ribonuclease family.

It localises to the secreted. Has a low ribonuclease activity. The protein is Ribonuclease 8 (RNASE8) of Miopithecus talapoin (Angolan talapoin).